Consider the following 100-residue polypeptide: MARKSLIQRERKRQKLEQKYHLIRRSSKKEISKVPSLSDKWEIHGKLQSSPRNSAPTRLHRRCFLTGRPGANYRYFGLSGHILREMVHACLLPGATRSSW.

It belongs to the universal ribosomal protein uS14 family. As to quaternary structure, part of the 30S ribosomal subunit.

It is found in the plastid. It localises to the chloroplast. Functionally, binds 16S rRNA, required for the assembly of 30S particles. The polypeptide is Small ribosomal subunit protein uS14c (Vitis vinifera (Grape)).